Reading from the N-terminus, the 454-residue chain is Tumor necrosis factor receptor superfamily member 1A (454 aa).

The first 29 residues, 1-29 (MGLPTVPGLLLSLVLLALLMGIHPSGVTG), serve as a signal peptide directing secretion. Residues 30 to 212 (LVPSLGDREK…VTNPQDSGTA (183 aa)) are Extracellular-facing. 4 TNFR-Cys repeats span residues 43–82 (LCPQGKYVHSKNNSICCTKCHKGTYLVSDCPSPGRDTVCR), 83–125 (ECEK…DTVC), 126–166 (GCKE…NTVC), and 167–196 (NCHAGFFLRESECVPCSHCKKNEECMKLCL). 12 disulfides stabilise this stretch: cysteine 44–cysteine 58, cysteine 59–cysteine 72, cysteine 62–cysteine 81, cysteine 84–cysteine 99, cysteine 102–cysteine 117, cysteine 105–cysteine 125, cysteine 127–cysteine 143, cysteine 146–cysteine 158, cysteine 149–cysteine 166, cysteine 168–cysteine 179, cysteine 182–cysteine 195, and cysteine 185–cysteine 191. An N-linked (GlcNAc...) asparagine glycan is attached at asparagine 54. N-linked (GlcNAc...) asparagine glycosylation occurs at asparagine 151. An N-linked (GlcNAc...) asparagine glycan is attached at asparagine 202. A helical membrane pass occupies residues 213–235 (VLLPLVILLGLCLLSFIFISLMC). The Cytoplasmic segment spans residues 236–454 (RYPRWRPEVY…APSSTTRLPR (219 aa)). Residues 339 to 349 (VQKWEDSAHPQ) form an N-SMase activation domain (NSD) region. The 86-residue stretch at 356–441 (LAILYAVVDG…GCLENILEAL (86 aa)) folds into the Death domain. A glycan ((Microbial infection) N-beta-linked (GlcNAc) arginine) is linked at arginine 376.

In terms of assembly, binding of TNF to the extracellular domain leads to homotrimerization. The aggregated death domains provide a novel molecular interface that interacts specifically with the death domain of TRADD. Various TRADD-interacting proteins such as TRAFS, RIPK1 and possibly FADD, are recruited to the complex by their association with TRADD. This complex activates at least two distinct signaling cascades, apoptosis and NF-kappa-B signaling. Interacts with BAG4, BABAM2, FEM1B, GRB2, SQSTM1 and TRPC4AP. Interacts with DAB2IP. Interacts directly with NOL3 (via CARD domain); inhibits TNF-signaling pathway. Interacts with SH3RF2, TRADD and RIPK1. SH3RF2 facilitates the recruitment of RIPK1 and TRADD to TNFRSF1A in a TNF-alpha-dependent process. Interacts with PGLYRP1; this interaction is important for cell death induction. Interacts (via death domain) with MADD (via death domain). Post-translationally, (Microbial infection) Glycosylated at Arg-376 by S.typhimurium protein Ssek3: arginine GlcNAcylation prevents homotypic/heterotypic death domain interactions.

Its subcellular location is the cell membrane. It is found in the golgi apparatus membrane. Receptor for TNFSF2/TNF-alpha and homotrimeric TNFSF1/lymphotoxin-alpha. The adapter molecule FADD recruits caspase-8 to the activated receptor. The resulting death-inducing signaling complex (DISC) performs caspase-8 proteolytic activation which initiates the subsequent cascade of caspases (aspartate-specific cysteine proteases) mediating apoptosis. This chain is Tumor necrosis factor receptor superfamily member 1A (Tnfrsf1a), found in Mus musculus (Mouse).